We begin with the raw amino-acid sequence, 471 residues long: Glycosyl hydrolase family 109 protein 1 (471 aa).

The signal sequence occupies residues 1–15 (MIKNLSTFFVGIALS). Cys-16 carries the N-palmitoyl cysteine lipid modification. A lipid anchor (S-diacylglycerol cysteine) is attached at Cys-16. Residues 70–71 (MR), Asp-92, 141–144 (WKHH), 161–162 (EV), and Asn-190 contribute to the NAD(+) site. Substrate-binding positions include Tyr-219, Arg-235, 247-250 (YATH), and Tyr-325. Tyr-247 contributes to the NAD(+) binding site.

Belongs to the Gfo/Idh/MocA family. Glycosyl hydrolase 109 subfamily. Requires NAD(+) as cofactor.

It is found in the cell membrane. Glycosidase. This Phocaeicola vulgatus (strain ATCC 8482 / DSM 1447 / JCM 5826 / CCUG 4940 / NBRC 14291 / NCTC 11154) (Bacteroides vulgatus) protein is Glycosyl hydrolase family 109 protein 1.